The primary structure comprises 190 residues: Bifunctional protein PyrR (190 aa).

Positions 107–119 (IILVDDVLYSGRT) match the PRPP-binding motif.

This sequence belongs to the purine/pyrimidine phosphoribosyltransferase family. PyrR subfamily.

It carries out the reaction UMP + diphosphate = 5-phospho-alpha-D-ribose 1-diphosphate + uracil. Functionally, regulates the transcription of the pyrimidine nucleotide (pyr) operon in response to exogenous pyrimidines. Also displays a weak uracil phosphoribosyltransferase activity which is not physiologically significant. The sequence is that of Bifunctional protein PyrR from Corynebacterium diphtheriae (strain ATCC 700971 / NCTC 13129 / Biotype gravis).